A 466-amino-acid chain; its full sequence is Asparagine--tRNA ligase (466 aa).

The protein belongs to the class-II aminoacyl-tRNA synthetase family. As to quaternary structure, homodimer.

The protein localises to the cytoplasm. It carries out the reaction tRNA(Asn) + L-asparagine + ATP = L-asparaginyl-tRNA(Asn) + AMP + diphosphate + H(+). The polypeptide is Asparagine--tRNA ligase (Serratia proteamaculans (strain 568)).